The primary structure comprises 352 residues: S-adenosylmethionine:tRNA ribosyltransferase-isomerase (352 aa).

The protein belongs to the QueA family. Monomer.

Its subcellular location is the cytoplasm. The enzyme catalyses 7-aminomethyl-7-carbaguanosine(34) in tRNA + S-adenosyl-L-methionine = epoxyqueuosine(34) in tRNA + adenine + L-methionine + 2 H(+). The protein operates within tRNA modification; tRNA-queuosine biosynthesis. Transfers and isomerizes the ribose moiety from AdoMet to the 7-aminomethyl group of 7-deazaguanine (preQ1-tRNA) to give epoxyqueuosine (oQ-tRNA). The chain is S-adenosylmethionine:tRNA ribosyltransferase-isomerase from Vibrio cholerae serotype O1 (strain ATCC 39315 / El Tor Inaba N16961).